A 45-amino-acid polypeptide reads, in one-letter code: Pyruvate dehydrogenase E1 component (45 aa).

Homodimer. Thiamine diphosphate serves as cofactor.

The catalysed reaction is N(6)-[(R)-lipoyl]-L-lysyl-[protein] + pyruvate + H(+) = N(6)-[(R)-S(8)-acetyldihydrolipoyl]-L-lysyl-[protein] + CO2. Its function is as follows. The pyruvate dehydrogenase complex catalyzes the overall conversion of pyruvate to acetyl-CoA and CO(2). It contains multiple copies of three enzymatic components: pyruvate dehydrogenase (E1), dihydrolipoamide acetyltransferase (E2) and lipoamide dehydrogenase (E3). In Azotobacter vinelandii, this protein is Pyruvate dehydrogenase E1 component.